The sequence spans 446 residues: D-inositol 3-phosphate glycosyltransferase (446 aa).

Positions 1–21 are disordered; sequence MSHYVGRLGRRSPAGSGRLRL. 1D-myo-inositol 3-phosphate is bound at residue His34. Residues 40–41 and Gly48 each bind UDP-N-acetyl-alpha-D-glucosamine; that span reads QP. 1D-myo-inositol 3-phosphate-binding positions include 45–50, Lys103, Tyr136, Thr160, and Arg180; that span reads DAGGMN. 3 residues coordinate UDP-N-acetyl-alpha-D-glucosamine: Arg255, Lys260, and Val321. Phe330, Arg331, and Ala333 together coordinate Mg(2+). UDP-N-acetyl-alpha-D-glucosamine contacts are provided by Glu343 and Glu351. Mg(2+) is bound at residue Thr357.

Belongs to the glycosyltransferase group 1 family. MshA subfamily. In terms of assembly, homodimer.

It carries out the reaction 1D-myo-inositol 3-phosphate + UDP-N-acetyl-alpha-D-glucosamine = 1D-myo-inositol 2-acetamido-2-deoxy-alpha-D-glucopyranoside 3-phosphate + UDP + H(+). Catalyzes the transfer of a N-acetyl-glucosamine moiety to 1D-myo-inositol 3-phosphate to produce 1D-myo-inositol 2-acetamido-2-deoxy-glucopyranoside 3-phosphate in the mycothiol biosynthesis pathway. The protein is D-inositol 3-phosphate glycosyltransferase of Streptomyces scabiei (strain 87.22).